We begin with the raw amino-acid sequence, 148 residues long: EKC/KEOPS complex subunit Lage3 (148 aa).

The interval 1–21 (MQTAHTGLSHTADGADGQTSR) is disordered.

This sequence belongs to the CTAG/PCC1 family. As to quaternary structure, component of the EKC/KEOPS complex composed of at least GON7, TP53RK, TPRKB, OSGEP and LAGE3; the whole complex dimerizes.

It localises to the cytoplasm. It is found in the nucleus. Its function is as follows. Component of the EKC/KEOPS complex that is required for the formation of a threonylcarbamoyl group on adenosine at position 37 (t(6)A37) in tRNAs that read codons beginning with adenine. The complex is probably involved in the transfer of the threonylcarbamoyl moiety of threonylcarbamoyl-AMP (TC-AMP) to the N6 group of A37. LAGE3 functions as a dimerization module for the complex. The protein is EKC/KEOPS complex subunit Lage3 of Mus musculus (Mouse).